The primary structure comprises 154 residues: Myoglobin (154 aa).

The Globin domain occupies 2-148 (GLSDGEWQLV…FRNDMAAQYK (147 aa)). Position 4 is a phosphoserine (S4). H65 is a nitrite binding site. H65 provides a ligand contact to O2. Residue T68 is modified to Phosphothreonine. Residue H94 coordinates heme b.

Belongs to the globin family. Monomeric.

The protein resides in the cytoplasm. Its subcellular location is the sarcoplasm. The catalysed reaction is Fe(III)-heme b-[protein] + nitric oxide + H2O = Fe(II)-heme b-[protein] + nitrite + 2 H(+). It carries out the reaction H2O2 + AH2 = A + 2 H2O. Functionally, monomeric heme protein which primary function is to store oxygen and facilitate its diffusion within muscle tissues. Reversibly binds oxygen through a pentacoordinated heme iron and enables its timely and efficient release as needed during periods of heightened demand. Depending on the oxidative conditions of tissues and cells, and in addition to its ability to bind oxygen, it also has a nitrite reductase activity whereby it regulates the production of bioactive nitric oxide. Under stress conditions, like hypoxia and anoxia, it also protects cells against reactive oxygen species thanks to its pseudoperoxidase activity. This is Myoglobin (MB) from Bos mutus grunniens (Wild yak).